The following is a 1199-amino-acid chain: DNA polymerase beta (1199 aa).

This sequence belongs to the DNA polymerase type-B family.

It carries out the reaction DNA(n) + a 2'-deoxyribonucleoside 5'-triphosphate = DNA(n+1) + diphosphate. DNA-directed DNA polymerase involved in viral DNA replication. The polypeptide is DNA polymerase beta (Ornithodoros (relapsing fever ticks)).